Reading from the N-terminus, the 206-residue chain is Outer-membrane lipoprotein carrier protein (206 aa).

An N-terminal signal peptide occupies residues 1 to 20 (MRLIRMLLPVLALTTLTAHA).

This sequence belongs to the LolA family. As to quaternary structure, monomer.

It localises to the periplasm. Its function is as follows. Participates in the translocation of lipoproteins from the inner membrane to the outer membrane. Only forms a complex with a lipoprotein if the residue after the N-terminal Cys is not an aspartate (The Asp acts as a targeting signal to indicate that the lipoprotein should stay in the inner membrane). This chain is Outer-membrane lipoprotein carrier protein, found in Pseudomonas fluorescens (strain Pf0-1).